A 479-amino-acid chain; its full sequence is Ribosomal RNA small subunit methyltransferase F (479 aa).

S-adenosyl-L-methionine is bound by residues 125-131, Glu-149, Asp-176, and Asp-194; that span reads AAAPGSK. Cys-247 serves as the catalytic Nucleophile.

The protein belongs to the class I-like SAM-binding methyltransferase superfamily. RsmB/NOP family.

It localises to the cytoplasm. It catalyses the reaction cytidine(1407) in 16S rRNA + S-adenosyl-L-methionine = 5-methylcytidine(1407) in 16S rRNA + S-adenosyl-L-homocysteine + H(+). Its function is as follows. Specifically methylates the cytosine at position 1407 (m5C1407) of 16S rRNA. The protein is Ribosomal RNA small subunit methyltransferase F of Shigella boydii serotype 4 (strain Sb227).